Here is a 325-residue protein sequence, read N- to C-terminus: GTP 3',8-cyclase (325 aa).

In terms of domain architecture, Radical SAM core spans 4–219 (NYNRNINYLR…HGLQQKFGLL (216 aa)). A GTP-binding site is contributed by Arg-13. The [4Fe-4S] cluster site is built by Cys-20 and Cys-24. Tyr-26 provides a ligand contact to S-adenosyl-L-methionine. Cys-27 contacts [4Fe-4S] cluster. Arg-63 contributes to the GTP binding site. Gly-67 serves as a coordination point for S-adenosyl-L-methionine. Thr-94 contributes to the GTP binding site. Ser-118 lines the S-adenosyl-L-methionine pocket. Position 155 (Lys-155) interacts with GTP. Met-189 is an S-adenosyl-L-methionine binding site. The [4Fe-4S] cluster site is built by Cys-254 and Cys-257. Residue 259–261 (RLR) coordinates GTP. Cys-271 is a [4Fe-4S] cluster binding site.

Belongs to the radical SAM superfamily. MoaA family. In terms of assembly, monomer and homodimer. [4Fe-4S] cluster serves as cofactor.

The catalysed reaction is GTP + AH2 + S-adenosyl-L-methionine = (8S)-3',8-cyclo-7,8-dihydroguanosine 5'-triphosphate + 5'-deoxyadenosine + L-methionine + A + H(+). The protein operates within cofactor biosynthesis; molybdopterin biosynthesis. Functionally, catalyzes the cyclization of GTP to (8S)-3',8-cyclo-7,8-dihydroguanosine 5'-triphosphate. This is GTP 3',8-cyclase from Desulforamulus reducens (strain ATCC BAA-1160 / DSM 100696 / MI-1) (Desulfotomaculum reducens).